We begin with the raw amino-acid sequence, 130 residues long: Small ribosomal subunit protein uS9 (130 aa).

The protein belongs to the universal ribosomal protein uS9 family.

The polypeptide is Small ribosomal subunit protein uS9 (Teredinibacter turnerae (strain ATCC 39867 / T7901)).